The primary structure comprises 513 residues: Prostaglandin E2 receptor EP4 subtype (513 aa).

Over 1–44 the chain is Extracellular; that stretch reads MAEVGGTIPRSNRELQRCVLLTTTIMSIPGVNASFSSTPERLNS. N-linked (GlcNAc...) asparagine glycosylation is present at Asn32. A helical transmembrane segment spans residues 45 to 68; the sequence is PVTIPAVMFIFGVVGNLVAIVVLC. The Cytoplasmic portion of the chain corresponds to 69–80; the sequence is KSRKEQKETTFY. The helical transmembrane segment at 81–104 threads the bilayer; the sequence is TLVCGLAVTDLLGTLLVSPVTIAT. The Extracellular segment spans residues 105–121; it reads YMKGQWPGDQALCDYST. Residues Cys117 and Cys195 are joined by a disulfide bond. The chain crosses the membrane as a helical span at residues 122 to 140; sequence FILLFFGLSGLSIICAMSI. Topologically, residues 141 to 160 are cytoplasmic; it reads ERYLAINHAYFYSHYVDKRL. Residues 161–185 traverse the membrane as a helical segment; it reads AGLTLFAIYASNVLFCALPNMGLGR. At 186–209 the chain is on the extracellular side; it reads SERQYPGTWCFIDWTTNVTAYAAF. A helical transmembrane segment spans residues 210–236; the sequence is SYMYAGFSSFLILATVLCNVLVCGALL. The Cytoplasmic portion of the chain corresponds to 237–295; it reads RMHRQFMRRTSLGTEQHHAAAAAAVASVACRGHAGASPALQRLSDFRRRRSFRRIAGAE. Residues 296–323 form a helical membrane-spanning segment; that stretch reads IQMVILLIATSLVVLICSIPLVVRVFIN. Over 324–340 the chain is Extracellular; it reads QLYQPNVVKDISRNPDL. Residues 341-360 traverse the membrane as a helical segment; that stretch reads QAIRIASVNPILDPWIYILL. Residues 361-513 lie on the Cytoplasmic side of the membrane; it reads RKTVLSKAIE…ETLKLSEKCI (153 aa). Residues 383–403 are disordered; sequence GRDSSAQHCSESRRTSSAMSG. Polar residues predominate over residues 384 to 403; it reads RDSSAQHCSESRRTSSAMSG. Ser402, Ser405, and Ser407 each carry phosphoserine.

Belongs to the G-protein coupled receptor 1 family. In terms of assembly, interacts with FEM1A. Post-translationally, phosphorylation mediates agonist-mediated desensitization by promoting cytoplasmic retention. Abundant expression in ileum, thymus and mastocytoma P-815 cells. Also observed in lung, spleen, heart and uterus.

The protein localises to the cell membrane. In terms of biological role, receptor for prostaglandin E2 (PGE2). The activity of this receptor is mediated by G(s) proteins that stimulate adenylate cyclase. Has a relaxing effect on smooth muscle. May play an important role in regulating renal hemodynamics, intestinal epithelial transport, adrenal aldosterone secretion, and uterine function. This chain is Prostaglandin E2 receptor EP4 subtype (Ptger4), found in Mus musculus (Mouse).